The sequence spans 109 residues: Putative membrane protein insertion efficiency factor (109 aa).

This sequence belongs to the UPF0161 family.

The protein localises to the cell inner membrane. In terms of biological role, could be involved in insertion of integral membrane proteins into the membrane. The chain is Putative membrane protein insertion efficiency factor from Rhodopseudomonas palustris (strain BisB18).